We begin with the raw amino-acid sequence, 425 residues long: MTKALDGVRVLDFTHVQSGPTCTQLLAWFGADVIKVERPGSGDITRGQLQDIPKVDSLYFTMLNHNKRSITLDTKNPKGKEVLTALIRTCDVLVENFGPGVLDRMGFTWEKIQEINPRMIVASIKGFGPGPYEDCKVYENVAQCTGGAASTTGFREGLPLVTGAQIGDSGTGLHLALGIVTALYQRHHTGRGQRVTAAMQDGVLNLCRVKLRDQQRLDHGPLKEYSQFGEGIPFGDAVPRAGNDSGGGQPGRILKCKGWEQDPNAYIYVITQAPVWEKICDVIGETGWKTHPDYATPPARLSRLNEIFARIEQWTMTKTKFEAMEILNADDIPCGPILSMKELAEDQSLRATGTIVEVDHPTRGKYLSVGNPIKLSDSPTEVKRSPLLGEHTDEILRDVLGYSDAHVAEIHDSGATAPPRKQAAE.

Residues 17–18 (QS), arginine 38, 72–75 (LDTK), 96–98 (NFG), arginine 104, and 136–139 (KVYE) each bind CoA. Aspartate 168 serves as the catalytic Nucleophile. 247–249 (GGQ) lines the substrate pocket.

It belongs to the CoA-transferase III family. Frc subfamily. In terms of assembly, homodimer.

It carries out the reaction formyl-CoA + oxalate = oxalyl-CoA + formate. Its pathway is metabolic intermediate degradation; oxalate degradation; CO(2) and formate from oxalate: step 1/2. Involved in the catabolism of oxalate and in the adapatation to low pH via the induction of the oxalate-dependent acid tolerance response (ATR). Catalyzes the transfer of the CoA moiety from formyl-CoA to oxalate. The sequence is that of Formyl-CoA:oxalate CoA-transferase from Rhodopseudomonas palustris (strain ATCC BAA-98 / CGA009).